A 280-amino-acid polypeptide reads, in one-letter code: Eukaryotic translation initiation factor 3 subunit F-1 (280 aa).

The MPN domain occupies 8 to 138 (VRVHPVVLFQ…LRAYVCIQLG (131 aa)).

This sequence belongs to the eIF-3 subunit F family. As to quaternary structure, component of the eukaryotic translation initiation factor 3 (eIF-3) complex. The eIF-3 complex interacts with pix.

The protein localises to the cytoplasm. Functionally, component of the eukaryotic translation initiation factor 3 (eIF-3) complex, which is involved in protein synthesis of a specialized repertoire of mRNAs and, together with other initiation factors, stimulates binding of mRNA and methionyl-tRNAi to the 40S ribosome. The eIF-3 complex specifically targets and initiates translation of a subset of mRNAs involved in cell proliferation. This is Eukaryotic translation initiation factor 3 subunit F-1 from Drosophila virilis (Fruit fly).